The primary structure comprises 1350 residues: Probable serine/threonine-protein kinase irlE (1350 aa).

The N-linked (GlcNAc...) asparagine glycan is linked to Asn-37. Residues 149-169 (FWEILASCYGTISFIKFFNIF) form a helical membrane-spanning segment. Positions 731 to 802 (EAELKEKFEI…NIQQNYENQH (72 aa)) form a coiled coil. Residues 761–771 (LKKKNKLKKQK) are compositionally biased toward basic residues. 2 disordered regions span residues 761 to 795 (LKKK…QNIQ) and 807 to 864 (RKFN…TTNS). Residues 772–795 (NQQQQQQAKQQAQQQKQQHQQNIQ) are compositionally biased toward low complexity. Residues 809 to 823 (FNQQTKGRPISPSSI) show a composition bias toward polar residues. Over residues 824 to 864 (QNQNLNPTLLQNQNQTSNPTPNLESTKKATPTTTTTTTTNS) the composition is skewed to low complexity. The region spanning 903–1166 (KKESNILGRG…LSSVLKHPLF (264 aa)) is the Protein kinase domain. Residues 909-917 (LGRGSNGTL) and Lys-932 each bind ATP. Asp-1034 (proton acceptor) is an active-site residue. In terms of domain architecture, KEN spans 1169 to 1346 (SLKKIKFLES…KNSIHFSNDT (178 aa)).

Belongs to the protein kinase superfamily. Ser/Thr protein kinase family.

It is found in the membrane. It carries out the reaction L-seryl-[protein] + ATP = O-phospho-L-seryl-[protein] + ADP + H(+). The enzyme catalyses L-threonyl-[protein] + ATP = O-phospho-L-threonyl-[protein] + ADP + H(+). The sequence is that of Probable serine/threonine-protein kinase irlE (irlE) from Dictyostelium discoideum (Social amoeba).